We begin with the raw amino-acid sequence, 507 residues long: ATP synthase subunit alpha, chloroplastic (507 aa).

Residue 170–177 participates in ATP binding; it reads GDRQTGKT.

It belongs to the ATPase alpha/beta chains family. In terms of assembly, F-type ATPases have 2 components, CF(1) - the catalytic core - and CF(0) - the membrane proton channel. CF(1) has five subunits: alpha(3), beta(3), gamma(1), delta(1), epsilon(1). CF(0) has four main subunits: a, b, b' and c.

The protein localises to the plastid. The protein resides in the chloroplast thylakoid membrane. The catalysed reaction is ATP + H2O + 4 H(+)(in) = ADP + phosphate + 5 H(+)(out). Its function is as follows. Produces ATP from ADP in the presence of a proton gradient across the membrane. The alpha chain is a regulatory subunit. This is ATP synthase subunit alpha, chloroplastic from Piper cenocladum (Ant piper).